Here is a 950-residue protein sequence, read N- to C-terminus: Oxysterol-binding protein-related protein 1 (950 aa).

The interaction with RAB7A stretch occupies residues 1 to 237 (MNTEAEQQLL…NKVIYKALKR (237 aa)). ANK repeat units follow at residues 47–76 (LGWT…EVNV), 80–109 (MGDT…DTTI), and 175–204 (LGNT…DPNL). Residues 235–334 (LKRYEGPLWK…WLEAIEEHSA (100 aa)) form the PH domain. Positions 430–463 (NFKLEQEQEKNKILSEALETLATEHHELEQSLVK) form a coiled coil. Residues 469–485 (SILSEDEFYDALSDSES) carry the FFAT motif. Residue S499 is modified to Phosphoserine. Basic and acidic residues predominate over residues 501–521 (EEEGEHLGSRKHRMSEEKDCG). Disordered regions lie at residues 501–527 (EEEG…DALS), 795–816 (KKNT…LDEM), and 881–913 (MENG…SEED). Residues 877–913 (DIRAMENGEIDQASEEKKRLEEKQRAARKNRSKSEED) are a coiled coil. Basic and acidic residues predominate over residues 890–901 (SEEKKRLEEKQR).

Belongs to the OSBP family. As to quaternary structure, interacts (via FFAT motif) with VAPA and VAPB. Interacts with the GTP-bound form of RAB7A. Interacts with OAS1B. Interacts (via FFAT motif) with MOSPD2 (via MSP domain).

Its subcellular location is the late endosome. Binds phospholipids; exhibits strong binding to phosphatidic acid and weak binding to phosphatidylinositol 3-phosphate. Stabilizes GTP-bound RAB7A on late endosomes/lysosomes and alters functional properties of late endocytic compartments via its interaction with RAB7A. Binds 25-hydroxycholesterol and cholesterol. The sequence is that of Oxysterol-binding protein-related protein 1 from Homo sapiens (Human).